We begin with the raw amino-acid sequence, 220 residues long: IQ domain-containing protein F3 (220 aa).

Residues 1–22 (MELDQDQKVETPEAAENGKDEM) show a composition bias toward basic and acidic residues. The tract at residues 1–81 (MELDQDQKVE…KQIQDEKTGI (81 aa)) is disordered. Positions 23–50 (QLEEQTQDEDTTETETETETETEAEAEG) are enriched in acidic residues. Positions 69–93 (QAEKQIQDEKTGIKEADRAIQEQTQ) form a coiled coil. Positions 146–175 (AELAGVKIQAWWRGTLVRRTLLLAILSAWT) constitute an IQ domain.

The polypeptide is IQ domain-containing protein F3 (Iqcf3) (Rattus norvegicus (Rat)).